The primary structure comprises 225 residues: PKHD-type hydroxylase YbiX (225 aa).

A Fe2OG dioxygenase domain is found at 78–177 (TLSTPLFNRY…RVASFMWIQS (100 aa)). Fe cation is bound by residues H96, D98, and H158. Position 168 (R168) interacts with 2-oxoglutarate.

Fe(2+) serves as cofactor. It depends on L-ascorbate as a cofactor.

The chain is PKHD-type hydroxylase YbiX from Escherichia coli O8 (strain IAI1).